The primary structure comprises 285 residues: Protein HEXIM1 (285 aa).

2 disordered regions span residues 1–56 (MSEV…QNPG) and 132–196 (LMED…LQKD). Positions 23-36 (GGWHHPVEREEHPV) are enriched in basic and acidic residues. Residues 168 to 180 (TDDDLEEEEDEAG) are compositionally biased toward acidic residues. Positions 213–284 (SKQDLIKEYL…QEGKQVAADS (72 aa)) form a coiled coil.

The protein belongs to the HEXIM family. Homooligomer and heterooligomer. Core component of the 7SK RNP complex.

The protein localises to the nucleus. It localises to the cytoplasm. In terms of biological role, transcriptional regulator which functions as a general RNA polymerase II transcription inhibitor. Core component of the 7SK RNP complex: in cooperation with 7SK snRNA sequesters P-TEFb in a large inactive 7SK snRNP complex preventing RNA polymerase II phosphorylation and subsequent transcriptional elongation. Plays a role in the regulation of DNA virus-mediated innate immune response by assembling into the HDP-RNP complex, a complex that serves as a platform for IRF3 phosphorylation and subsequent innate immune response activation through the cGAS-STING pathway. This is Protein HEXIM1 (hexim1) from Xenopus laevis (African clawed frog).